We begin with the raw amino-acid sequence, 345 residues long: Methylthioribose-1-phosphate isomerase (345 aa).

Substrate contacts are provided by residues 44 to 46 (RGA), Arg86, and Gln194. The active-site Proton donor is the Asp235. 245 to 246 (NK) is a binding site for substrate.

The protein belongs to the eIF-2B alpha/beta/delta subunits family. MtnA subfamily.

It carries out the reaction 5-(methylsulfanyl)-alpha-D-ribose 1-phosphate = 5-(methylsulfanyl)-D-ribulose 1-phosphate. It functions in the pathway amino-acid biosynthesis; L-methionine biosynthesis via salvage pathway; L-methionine from S-methyl-5-thio-alpha-D-ribose 1-phosphate: step 1/6. Functionally, catalyzes the interconversion of methylthioribose-1-phosphate (MTR-1-P) into methylthioribulose-1-phosphate (MTRu-1-P). The polypeptide is Methylthioribose-1-phosphate isomerase (Desulfitobacterium hafniense (strain Y51)).